A 348-amino-acid chain; its full sequence is Probable dual-specificity RNA methyltransferase RlmN (348 aa).

The active-site Proton acceptor is E90. A Radical SAM core domain is found at 96-324; the sequence is AAERLTVCVS…ASVRHTRGLE (229 aa). C103 and C329 are disulfide-bonded. Residues C110, C114, and C117 each coordinate [4Fe-4S] cluster. Residues 157 to 158, S187, 210 to 212, and N286 each bind S-adenosyl-L-methionine; these read GE and SLH. The active-site S-methylcysteine intermediate is the C329.

The protein belongs to the radical SAM superfamily. RlmN family. Requires [4Fe-4S] cluster as cofactor.

Its subcellular location is the cytoplasm. The enzyme catalyses adenosine(2503) in 23S rRNA + 2 reduced [2Fe-2S]-[ferredoxin] + 2 S-adenosyl-L-methionine = 2-methyladenosine(2503) in 23S rRNA + 5'-deoxyadenosine + L-methionine + 2 oxidized [2Fe-2S]-[ferredoxin] + S-adenosyl-L-homocysteine. It catalyses the reaction adenosine(37) in tRNA + 2 reduced [2Fe-2S]-[ferredoxin] + 2 S-adenosyl-L-methionine = 2-methyladenosine(37) in tRNA + 5'-deoxyadenosine + L-methionine + 2 oxidized [2Fe-2S]-[ferredoxin] + S-adenosyl-L-homocysteine. Specifically methylates position 2 of adenine 2503 in 23S rRNA and position 2 of adenine 37 in tRNAs. This Gloeobacter violaceus (strain ATCC 29082 / PCC 7421) protein is Probable dual-specificity RNA methyltransferase RlmN.